Reading from the N-terminus, the 508-residue chain is Photosystem II CP47 reaction center protein (508 aa).

Helical transmembrane passes span 21-36, 101-115, 140-156, 203-218, 237-252, and 457-472; these read SVHI…WAGS, IVFS…IWHW, GIHL…FGAF, IAAG…FHLS, VLSS…AFVV, and SFAL…HGSR.

Belongs to the PsbB/PsbC family. PsbB subfamily. PSII is composed of 1 copy each of membrane proteins PsbA, PsbB, PsbC, PsbD, PsbE, PsbF, PsbH, PsbI, PsbJ, PsbK, PsbL, PsbM, PsbT, PsbX, PsbY, PsbZ, Psb30/Ycf12, at least 3 peripheral proteins of the oxygen-evolving complex and a large number of cofactors. It forms dimeric complexes. Requires Binds multiple chlorophylls. PSII binds additional chlorophylls, carotenoids and specific lipids. as cofactor.

The protein localises to the plastid. The protein resides in the chloroplast thylakoid membrane. One of the components of the core complex of photosystem II (PSII). It binds chlorophyll and helps catalyze the primary light-induced photochemical processes of PSII. PSII is a light-driven water:plastoquinone oxidoreductase, using light energy to abstract electrons from H(2)O, generating O(2) and a proton gradient subsequently used for ATP formation. The protein is Photosystem II CP47 reaction center protein of Fagopyrum esculentum subsp. ancestrale (Wild buckwheat).